A 297-amino-acid chain; its full sequence is Small ribosomal subunit biogenesis GTPase RsgA (297 aa).

The CP-type G domain maps to 65-223 (INEIGRPAVA…IADTPGFSAI (159 aa)). Residues 114–117 (SKSD) and 166–174 (GQSGAGKST) contribute to the GTP site. Residues cysteine 247, cysteine 252, histidine 254, and cysteine 260 each contribute to the Zn(2+) site.

The protein belongs to the TRAFAC class YlqF/YawG GTPase family. RsgA subfamily. Monomer. Associates with 30S ribosomal subunit, binds 16S rRNA. Zn(2+) serves as cofactor.

It localises to the cytoplasm. Its function is as follows. One of several proteins that assist in the late maturation steps of the functional core of the 30S ribosomal subunit. Helps release RbfA from mature subunits. May play a role in the assembly of ribosomal proteins into the subunit. Circularly permuted GTPase that catalyzes slow GTP hydrolysis, GTPase activity is stimulated by the 30S ribosomal subunit. This is Small ribosomal subunit biogenesis GTPase RsgA from Lactobacillus johnsonii (strain CNCM I-12250 / La1 / NCC 533).